A 268-amino-acid polypeptide reads, in one-letter code: Shikimate dehydrogenase (NADP(+)) (268 aa).

Residue threonine 62 participates in shikimate binding. The Proton acceptor role is filled by lysine 66. Position 78 (glutamate 78) interacts with NADP(+). 2 residues coordinate shikimate: asparagine 87 and aspartate 102. Residues 126–130 (GSGGI) and leucine 207 each bind NADP(+). A shikimate-binding site is contributed by tyrosine 209. Glycine 230 contributes to the NADP(+) binding site.

It belongs to the shikimate dehydrogenase family. Homodimer.

It catalyses the reaction shikimate + NADP(+) = 3-dehydroshikimate + NADPH + H(+). It functions in the pathway metabolic intermediate biosynthesis; chorismate biosynthesis; chorismate from D-erythrose 4-phosphate and phosphoenolpyruvate: step 4/7. Functionally, involved in the biosynthesis of the chorismate, which leads to the biosynthesis of aromatic amino acids. Catalyzes the reversible NADPH linked reduction of 3-dehydroshikimate (DHSA) to yield shikimate (SA). The sequence is that of Shikimate dehydrogenase (NADP(+)) from Thermoplasma acidophilum (strain ATCC 25905 / DSM 1728 / JCM 9062 / NBRC 15155 / AMRC-C165).